Here is a 92-residue protein sequence, read N- to C-terminus: C-C motif chemokine 22 (92 aa).

A signal peptide spans 1–24; the sequence is MATLRVPLLVALVLLAVAIQTSDA. Disulfide bonds link Cys36/Cys60 and Cys37/Cys76.

This sequence belongs to the intercrine beta (chemokine CC) family. Expressed by activated splenic B-lymphocytes and dendritic cells. Low expression in lung, thymocytes, lymph node, and unstimulated splenic cells.

Its subcellular location is the secreted. Its function is as follows. Chemotactic for activated T-lymphocytes. May play an important role in the collaboration of dendritic cells and B-lymphocytes with T-cells in immune responses. In Mus musculus (Mouse), this protein is C-C motif chemokine 22 (Ccl22).